Reading from the N-terminus, the 431-residue chain is MANSC domain-containing protein 1 (431 aa).

The first 26 residues, Met1–Ser26, serve as a signal peptide directing secretion. At Gln27–Leu385 the chain is on the extracellular side. Asn31 carries N-linked (GlcNAc...) asparagine glycosylation. Residues Ser33–Tyr117 form the MANSC domain. N-linked (GlcNAc...) asparagine glycosylation is found at Asn222 and Asn251. Positions His236–Pro279 are disordered. Residues Thr250 to Ala265 show a composition bias toward polar residues. Positions Thr266 to Pro279 are enriched in low complexity. 2 N-linked (GlcNAc...) asparagine glycosylation sites follow: Asn327 and Asn352. Residues Asn352 to Val372 are disordered. Residues Leu386–Leu408 traverse the membrane as a helical segment. At Ser409–Ile431 the chain is on the cytoplasmic side.

The protein localises to the membrane. This chain is MANSC domain-containing protein 1 (MANSC1), found in Macaca fascicularis (Crab-eating macaque).